A 636-amino-acid polypeptide reads, in one-letter code: tRNA 5-methylaminomethyl-2-thiouridine biosynthesis bifunctional protein MnmC (636 aa).

Residues 1 to 202 are tRNA (mnm(5)s(2)U34)-methyltransferase; the sequence is MTVSKILKQV…ERAALRAQSH (202 aa). Residues 227–636 form an FAD-dependent cmnm(5)s(2)U34 oxidoreductase region; the sequence is IGGGVASACL…GKALEMSGKS (410 aa).

This sequence in the N-terminal section; belongs to the methyltransferase superfamily. tRNA (mnm(5)s(2)U34)-methyltransferase family. It in the C-terminal section; belongs to the DAO family. FAD is required as a cofactor.

The protein localises to the cytoplasm. The enzyme catalyses 5-aminomethyl-2-thiouridine(34) in tRNA + S-adenosyl-L-methionine = 5-methylaminomethyl-2-thiouridine(34) in tRNA + S-adenosyl-L-homocysteine + H(+). Catalyzes the last two steps in the biosynthesis of 5-methylaminomethyl-2-thiouridine (mnm(5)s(2)U) at the wobble position (U34) in tRNA. Catalyzes the FAD-dependent demodification of cmnm(5)s(2)U34 to nm(5)s(2)U34, followed by the transfer of a methyl group from S-adenosyl-L-methionine to nm(5)s(2)U34, to form mnm(5)s(2)U34. The polypeptide is tRNA 5-methylaminomethyl-2-thiouridine biosynthesis bifunctional protein MnmC (Shewanella halifaxensis (strain HAW-EB4)).